The following is a 131-amino-acid chain: Small ribosomal subunit protein uS11 (131 aa).

The protein belongs to the universal ribosomal protein uS11 family. In terms of assembly, part of the 30S ribosomal subunit. Interacts with proteins S7 and S18. Binds to IF-3.

Functionally, located on the platform of the 30S subunit, it bridges several disparate RNA helices of the 16S rRNA. Forms part of the Shine-Dalgarno cleft in the 70S ribosome. This Helicobacter acinonychis (strain Sheeba) protein is Small ribosomal subunit protein uS11.